A 128-amino-acid chain; its full sequence is Sulfurtransferase TusD (128 aa).

The Cysteine persulfide intermediate role is filled by Cys78.

It belongs to the DsrE/TusD family. Heterohexamer, formed by a dimer of trimers. The hexameric TusBCD complex contains 2 copies each of TusB, TusC and TusD. The TusBCD complex interacts with TusE.

The protein localises to the cytoplasm. Functionally, part of a sulfur-relay system required for 2-thiolation of 5-methylaminomethyl-2-thiouridine (mnm(5)s(2)U) at tRNA wobble positions. Accepts sulfur from TusA and transfers it in turn to TusE. The chain is Sulfurtransferase TusD from Buchnera aphidicola subsp. Acyrthosiphon pisum (strain 5A).